The following is a 960-amino-acid chain: RasGEF domain-containing serine/threonine-protein kinase X (960 aa).

Positions 21–274 (LEFNEKIGKG…FDEILSQLKV (254 aa)) constitute a Protein kinase domain. Residues 27-35 (IGKGSFGSV) and K48 contribute to the ATP site. The active-site Proton acceptor is D140. The segment covering 314 to 368 (NISFSPNNSNNNNNNNNNISNISPDITTGIQQINLSSSGGSNNSSPSTPPQGSQL) has biased composition (low complexity). Disordered regions lie at residues 314–372 (NISF…VSLA) and 393–413 (GQLS…HKPS). In terms of domain architecture, N-terminal Ras-GEF spans 437 to 565 (PCYAALTSHI…LGTTISNNEL (129 aa)). The disordered stretch occupies residues 596–651 (NNNNNNNNNPVNNINNINNNNSVNSSSSNNNNNNNNNNSNNNNNNNNNNNNNNNNN). The Ras-GEF domain occupies 712-957 (HSTELARQIT…KNNSLKCEPP (246 aa)).

The protein belongs to the protein kinase superfamily. TKL Ser/Thr protein kinase family.

It catalyses the reaction L-seryl-[protein] + ATP = O-phospho-L-seryl-[protein] + ADP + H(+). The enzyme catalyses L-threonyl-[protein] + ATP = O-phospho-L-threonyl-[protein] + ADP + H(+). Promotes the exchange of Ras-bound GDP by GTP. In Dictyostelium discoideum (Social amoeba), this protein is RasGEF domain-containing serine/threonine-protein kinase X (gefX).